Here is a 95-residue protein sequence, read N- to C-terminus: Large ribosomal subunit protein bL27 (95 aa).

The propeptide occupies 1-10 (MLLTMNLQLF). Residues 12 to 38 (HKKGGGSTSNGRDSESKRLGAKSADGQ) are disordered.

Belongs to the bacterial ribosomal protein bL27 family. In terms of processing, the N-terminus is cleaved by ribosomal processing cysteine protease Prp.

This Enterococcus faecalis (strain ATCC 700802 / V583) protein is Large ribosomal subunit protein bL27.